Consider the following 419-residue polypeptide: UPF0761 membrane protein ACIAD3168 (419 aa).

6 helical membrane passes run 42-62 (ALTYTTLFAVVPMLTVFLVII), 105-125 (LTVIGILFLFVTTVMMLSTIE), 148-168 (WTIISLGPIILGSAFVISSTV), 186-206 (AFILWLISFGLTILGFFILYW), 212-232 (TVPMYAAIIAACFSAAIFELL), and 252-272 (AFAAIPIFLLWIFLSWNIVLL).

The protein belongs to the UPF0761 family.

The protein localises to the cell inner membrane. The sequence is that of UPF0761 membrane protein ACIAD3168 from Acinetobacter baylyi (strain ATCC 33305 / BD413 / ADP1).